A 131-amino-acid chain; its full sequence is UPF0251 protein MMP0619 (131 aa).

This sequence belongs to the UPF0251 family.

The polypeptide is UPF0251 protein MMP0619 (Methanococcus maripaludis (strain DSM 14266 / JCM 13030 / NBRC 101832 / S2 / LL)).